We begin with the raw amino-acid sequence, 171 residues long: Protein GrpE (171 aa).

A disordered region spans residues 1 to 22; sequence MNHEQPDIESQQSAADAAATAG.

It belongs to the GrpE family. Homodimer.

It localises to the cytoplasm. Participates actively in the response to hyperosmotic and heat shock by preventing the aggregation of stress-denatured proteins, in association with DnaK and GrpE. It is the nucleotide exchange factor for DnaK and may function as a thermosensor. Unfolded proteins bind initially to DnaJ; upon interaction with the DnaJ-bound protein, DnaK hydrolyzes its bound ATP, resulting in the formation of a stable complex. GrpE releases ADP from DnaK; ATP binding to DnaK triggers the release of the substrate protein, thus completing the reaction cycle. Several rounds of ATP-dependent interactions between DnaJ, DnaK and GrpE are required for fully efficient folding. The polypeptide is Protein GrpE (Stenotrophomonas maltophilia (strain K279a)).